The primary structure comprises 789 residues: Probable Xaa-Pro aminopeptidase SNOG_02267 (789 aa).

D240, D251, E375, and E416 together coordinate Mn(2+). 2 disordered regions span residues 607-658 (SMSK…TGLA) and 670-704 (NHVSESPTPSQRRAGGCTPHWRGQNRADQSGDDAL). Positions 622–637 (VISQKQIRNRRSVSST) are enriched in polar residues. The span at 638–650 (ARHDLRGDRERPQ) shows a compositional bias: basic and acidic residues.

Belongs to the peptidase M24B family. It depends on Mn(2+) as a cofactor.

The catalysed reaction is Release of any N-terminal amino acid, including proline, that is linked to proline, even from a dipeptide or tripeptide.. Its function is as follows. Catalyzes the removal of a penultimate prolyl residue from the N-termini of peptides. In Phaeosphaeria nodorum (strain SN15 / ATCC MYA-4574 / FGSC 10173) (Glume blotch fungus), this protein is Probable Xaa-Pro aminopeptidase SNOG_02267.